A 121-amino-acid chain; its full sequence is Large ribosomal subunit protein uL14c (121 aa).

It belongs to the universal ribosomal protein uL14 family. As to quaternary structure, part of the 50S ribosomal subunit.

Its subcellular location is the plastid. The protein resides in the chloroplast. Its function is as follows. Binds to 23S rRNA. This is Large ribosomal subunit protein uL14c from Oedogonium cardiacum (Filamentous green alga).